The following is a 337-amino-acid chain: Inositol 2-dehydrogenase (337 aa).

It belongs to the Gfo/Idh/MocA family. In terms of assembly, homotetramer.

It catalyses the reaction myo-inositol + NAD(+) = scyllo-inosose + NADH + H(+). Involved in the oxidation of myo-inositol (MI) to 2-keto-myo-inositol (2KMI or 2-inosose). The protein is Inositol 2-dehydrogenase of Gluconacetobacter diazotrophicus (strain ATCC 49037 / DSM 5601 / CCUG 37298 / CIP 103539 / LMG 7603 / PAl5).